The chain runs to 338 residues: Heat-inducible transcription repressor HrcA (338 aa).

Belongs to the HrcA family.

Its function is as follows. Negative regulator of class I heat shock genes (grpE-dnaK-dnaJ and groELS operons). Prevents heat-shock induction of these operons. The protein is Heat-inducible transcription repressor HrcA of Thermotoga petrophila (strain ATCC BAA-488 / DSM 13995 / JCM 10881 / RKU-1).